A 196-amino-acid polypeptide reads, in one-letter code: STLEVRSQATQDLSEYYNRPYFDLRNLSGYREGNTVTFINHYQQTDVKLEGKDKDKIKDGNNENLDVFVVREGSGRQADNNSIGGITKTNRTQHIDTVQNVNLLVSKSTGQHTTSVTSTNYSIYKEEISLKELDFKLRKHLIDKHDLYKTEPKDSKIRVTMKNGDFYTFELNKKLQTHRMGDVIDGRNIEKIEVNL.

Residues 65–167 (LDVFVVREGS…RVTMKNGDFY (103 aa)) are sialyl Lewis X-binding.

This sequence belongs to the staphylococcal/streptococcal toxin family. In terms of assembly, homodimer (via its C-terminal domain). Interacts with host FCAR and SELPLG (via sialyl Lewis X).

The protein resides in the secreted. Functionally, secreted protein that plays a role in the inhibition of host immune system. Targets myeloid cells such as monocytes or granulocytes through binding with sialyllactosamine-containing glycoproteins. Prevents initial rolling of neutrophils toward the site of infection by interacting with host SELPLG. Disrupts neutrophil motility by induction of cell adhesion via interacting with glycans but independently of SELPLG. The chain is Superantigen-like protein 11 from Staphylococcus aureus.